The primary structure comprises 194 residues: 7-methyl-GTP pyrophosphatase (194 aa).

Asp69 functions as the Proton acceptor in the catalytic mechanism.

Belongs to the Maf family. YceF subfamily. It depends on a divalent metal cation as a cofactor.

It localises to the cytoplasm. The enzyme catalyses N(7)-methyl-GTP + H2O = N(7)-methyl-GMP + diphosphate + H(+). Functionally, nucleoside triphosphate pyrophosphatase that hydrolyzes 7-methyl-GTP (m(7)GTP). May have a dual role in cell division arrest and in preventing the incorporation of modified nucleotides into cellular nucleic acids. This is 7-methyl-GTP pyrophosphatase (yceF) from Shigella flexneri.